Consider the following 237-residue polypeptide: Casparian strip membrane protein 2 (237 aa).

Positions Met1 to Gly48 are disordered. At Met1–Cys69 the chain is on the cytoplasmic side. A helical transmembrane segment spans residues Leu70–Ile90. Residues Ser91–Ala117 are Extracellular-facing. A helical membrane pass occupies residues Phe118–Phe138. The Cytoplasmic portion of the chain corresponds to Ser139 to Lys152. A helical membrane pass occupies residues Leu153–Ala173. Residues Ala174–Gly205 lie on the Extracellular side of the membrane. Residues Ala206–Phe226 form a helical membrane-spanning segment. Topologically, residues Thr227–Ser237 are cytoplasmic.

Belongs to the Casparian strip membrane proteins (CASP) family. Homodimer and heterodimers.

Its subcellular location is the cell membrane. Its function is as follows. Regulates membrane-cell wall junctions and localized cell wall deposition. Required for establishment of the Casparian strip membrane domain (CSD) and the subsequent formation of Casparian strips, a cell wall modification of the root endodermis that determines an apoplastic barrier between the intraorganismal apoplasm and the extraorganismal apoplasm and prevents lateral diffusion. The polypeptide is Casparian strip membrane protein 2 (Oryza sativa subsp. japonica (Rice)).